Here is a 435-residue protein sequence, read N- to C-terminus: uncharacterized protein (435 aa).

The next 11 membrane-spanning stretches (helical) occupy residues 9 to 29 (IIVLFGSFAIILAVGVPITFA), 57 to 77 (VGLDGFTLLAIPFFVLAGNIM), 110 to 130 (TLFGAISGSAVASAAAVGGIM), 146 to 166 (AINVASAPIGLMIPPSNVLIV), 176 to 196 (VAALFLAGYLPGILTALALMT), 226 to 246 (LPSLLLIFIIIGGIIGGVFTP), 280 to 300 (VVTSSIVLLLVGCSMGMSWAM), 321 to 341 (WVILLIINLILLFVGTFMDIT), 343 to 363 (AILIFTPIFLPIAQHLGIDPV), 367 to 387 (IIMVFNLTIGLCTPPVGTILF), and 408 to 428 (FLALFVVMAMICYFPQLSLLL).

The protein belongs to the YiaN/YgiK family.

It localises to the cell inner membrane. This is an uncharacterized protein from Salmonella typhimurium (strain LT2 / SGSC1412 / ATCC 700720).